The sequence spans 603 residues: uncharacterized protein (603 aa).

Residues 496–513 (EEEDQEEDDTSDDDDQEK) show a composition bias toward acidic residues. Disordered regions lie at residues 496-536 (EEED…GSLE) and 549-568 (AVAE…DTAQ). Over residues 517–533 (NPQNNIGSLTRTPSSPG) the composition is skewed to polar residues.

This sequence belongs to the herpesviridae US22 family.

This is an uncharacterized protein from Human cytomegalovirus (strain AD169) (HHV-5).